The following is a 329-amino-acid chain: Probable ABC transporter permease protein MG188 (329 aa).

Helical transmembrane passes span 30–50 (FLLF…PFFL), 96–116 (LISL…IVFV), 128–148 (VFFL…VYIF), 176–196 (ALWA…VLII), 234–254 (LIFL…LALF), and 283–303 (NLAG…GLVL). The 216-residue stretch at 88-303 (LRNSFLYSLI…VLGVCYGLVL (216 aa)) folds into the ABC transmembrane type-1 domain.

It belongs to the binding-protein-dependent transport system permease family. MalFG subfamily.

It localises to the cell membrane. Functionally, probably part of a binding-protein-dependent transport system. Probably responsible for the translocation of the substrate across the membrane. The protein is Probable ABC transporter permease protein MG188 of Mycoplasma genitalium (strain ATCC 33530 / DSM 19775 / NCTC 10195 / G37) (Mycoplasmoides genitalium).